Consider the following 147-residue polypeptide: Nudix hydrolase 1 (147 aa).

Position 2 is an N-acetylserine (serine 2). One can recognise a Nudix hydrolase domain in the interval 7-140 (IPRVAVVVFI…EKLFGSGFNP (134 aa)). Positions 41-62 (GHLEFGESFEECAAREVMEETG) match the Nudix box motif. Mg(2+)-binding residues include glutamate 56 and glutamate 60.

Belongs to the Nudix hydrolase family. As to quaternary structure, homodimer. Mg(2+) is required as a cofactor. The cofactor is Mn(2+). In terms of tissue distribution, expressed in roots, stems and leaves.

Its subcellular location is the cytoplasm. It carries out the reaction 7,8-dihydroneopterin 3'-triphosphate + H2O = 7,8-dihydroneopterin 3'-phosphate + diphosphate + H(+). It catalyses the reaction NAD(+) + H2O = beta-nicotinamide D-ribonucleotide + AMP + 2 H(+). The enzyme catalyses NADH + H2O = reduced beta-nicotinamide D-ribonucleotide + AMP + 2 H(+). The catalysed reaction is 8-oxo-dGTP + H2O = 8-oxo-dGMP + diphosphate + H(+). Functionally, mediates the hydrolysis of some nucleoside diphosphate derivatives. Its substrate specificity is unclear. In vitro, it can use NTP, dNTP, 8-oxo-GTP, 8-oxo-dGTP, dGTP, dATP, dTTP or dihydroneopterin triphosphate (DHNTP) as substrate. Has some NADH pyrophosphatase activity in vitro; however, such activity may not be relevant in vivo due to the high concentration of manganese used during the experiments. Plays an important role in protection against oxidative DNA and RNA damage by removing oxidatively damaged form of guanine. This is Nudix hydrolase 1 (NUDT1) from Arabidopsis thaliana (Mouse-ear cress).